The chain runs to 496 residues: probable leucine aminopeptidase 2 (496 aa).

Residues 1–16 (MRSLLWASLLSGVLAG) form the signal peptide. One can recognise a PA domain in the interval 111 to 205 (PSVEVTADVA…SLEDGQKLIK (95 aa)). N-linked (GlcNAc...) asparagine glycosylation is present at asparagine 224. 2 residues coordinate Zn(2+): histidine 248 and aspartate 260. Glutamate 292 acts as the Proton acceptor in catalysis. Glutamate 293 provides a ligand contact to Zn(2+). An N-linked (GlcNAc...) asparagine glycan is attached at asparagine 307. Aspartate 321 is a Zn(2+) binding site. Residues asparagine 341 and asparagine 402 are each glycosylated (N-linked (GlcNAc...) asparagine). Residue histidine 419 participates in Zn(2+) binding. Residues asparagine 424 and asparagine 458 are each glycosylated (N-linked (GlcNAc...) asparagine). The tract at residues 475–496 (KRAPKTHAHVSGSGCWHSQVEA) is disordered.

It belongs to the peptidase M28 family. M28A subfamily. Monomer. Zn(2+) serves as cofactor.

It localises to the secreted. Extracellular aminopeptidase that releases a wide variety of amino acids from natural peptides. In Aspergillus oryzae (strain ATCC 42149 / RIB 40) (Yellow koji mold), this protein is probable leucine aminopeptidase 2 (lap2).